A 338-amino-acid polypeptide reads, in one-letter code: Ketol-acid reductoisomerase (NADP(+)) (338 aa).

Residues 1-181 (MQVYYDKDAD…GGGRAGVIET (181 aa)) form the KARI N-terminal Rossmann domain. NADP(+)-binding positions include 24 to 27 (YGSQ), arginine 47, serine 50, serine 52, and 82 to 85 (DEHQ). The active site involves histidine 107. Glycine 133 is an NADP(+) binding site. Residues 182-327 (SFKDETETDL…AKLRDMMPWI (146 aa)) enclose the KARI C-terminal knotted domain. Mg(2+) contacts are provided by aspartate 190, glutamate 194, glutamate 226, and glutamate 230. Residue serine 251 coordinates substrate.

Belongs to the ketol-acid reductoisomerase family. Requires Mg(2+) as cofactor.

The enzyme catalyses (2R)-2,3-dihydroxy-3-methylbutanoate + NADP(+) = (2S)-2-acetolactate + NADPH + H(+). It carries out the reaction (2R,3R)-2,3-dihydroxy-3-methylpentanoate + NADP(+) = (S)-2-ethyl-2-hydroxy-3-oxobutanoate + NADPH + H(+). Its pathway is amino-acid biosynthesis; L-isoleucine biosynthesis; L-isoleucine from 2-oxobutanoate: step 2/4. The protein operates within amino-acid biosynthesis; L-valine biosynthesis; L-valine from pyruvate: step 2/4. Its function is as follows. Involved in the biosynthesis of branched-chain amino acids (BCAA). Catalyzes an alkyl-migration followed by a ketol-acid reduction of (S)-2-acetolactate (S2AL) to yield (R)-2,3-dihydroxy-isovalerate. In the isomerase reaction, S2AL is rearranged via a Mg-dependent methyl migration to produce 3-hydroxy-3-methyl-2-ketobutyrate (HMKB). In the reductase reaction, this 2-ketoacid undergoes a metal-dependent reduction by NADPH to yield (R)-2,3-dihydroxy-isovalerate. The sequence is that of Ketol-acid reductoisomerase (NADP(+)) from Thioalkalivibrio sulfidiphilus (strain HL-EbGR7).